The sequence spans 474 residues: E3 ubiquitin-protein ligase CBL-C (474 aa).

A 4H region spans residues 7–145; the sequence is PWGRQWEEAR…HALFPGGKYC (139 aa). Positions 7 to 321 constitute a Cbl-PTB domain; the sequence is PWGRQWEEAR…GKTHNPDLTE (315 aa). Residues 146–218 form an EF-hand-like region; the sequence is GHMYQLTKAP…FEFDVFTRLF (73 aa). 3 residues coordinate Ca(2+): Asp-199, Thr-201, and Glu-210. The SH2-like stretch occupies residues 219-321; the sequence is QPWPTLLKNW…GKTHNPDLTE (103 aa). Arg-264 contacts 4-O-phospho-L-tyrosine. The segment at 322–350 is linker; sequence LGQAEPQQRIHVSEEQLQLYWAMDSTFEL. Tyr-341 carries the post-translational modification Phosphotyrosine; by SRC. An RING-type zinc finger spans residues 351 to 390; it reads CKICAESNKDVKIEPCGHLLCSCCLAAWQHSDSQTCPFCR. The tract at residues 351–474 is interaction with RET; the sequence is CKICAESNKD…ALGPQDPAPA (124 aa). The segment at 409-474 is disordered; that stretch reads TAEDSGNSSD…ALGPQDPAPA (66 aa). The segment covering 432 to 441 has biased composition (pro residues); that stretch reads SAPPLPPRPD.

In terms of assembly, interacts with ubiquitin-conjugating enzyme E2 UBE2D2 and UBE2D3. Isoform 1 interacts with EGFR (tyrosine phosphorylated). Interacts with the SH3 domain proteins LYN and CRK. Interacts (via RING-type zinc finger) with TGFB1I1 (via LIM zinc-binding domain 2); the interaction is direct and enhances the E3 activity. Interacts directly with RET (inactive) and CD2AP; dissociates from RET upon RET activation by GDNF which also increases the interaction with CD2AP suggesting dissociation as CBLC:CD2AP complex. Interacts with SRC; the interaction is enhanced when SRC is phosphorylated at 'Tyr-419'. In terms of processing, phosphorylated on multiple tyrosine residues by SRC. Isoform 1, but not isoform 2, is phosphorylated on tyrosines by EGFR. Autoubiquitinated when phosphorylated at Tyr-341, enhanced by SRC; suggesting proteasomal degradation. In terms of tissue distribution, ubiquitous.

The enzyme catalyses S-ubiquitinyl-[E2 ubiquitin-conjugating enzyme]-L-cysteine + [acceptor protein]-L-lysine = [E2 ubiquitin-conjugating enzyme]-L-cysteine + N(6)-ubiquitinyl-[acceptor protein]-L-lysine.. Its activity is regulated as follows. Phosphorylation at Tyr-341 is necessary and sufficient for the activation of E3 activity. In terms of biological role, acts as an E3 ubiquitin-protein ligase, which accepts ubiquitin from specific E2 ubiquitin-conjugating enzymes, and then transfers it to substrates promoting their degradation by the proteasome. Functionally coupled with the E2 ubiquitin-protein ligases UB2D1, UB2D2 and UB2D3. Regulator of EGFR mediated signal transduction; upon EGF activation, ubiquitinates EGFR. Isoform 1, but not isoform 2, inhibits EGF stimulated MAPK1 activation. Promotes ubiquitination of SRC phosphorylated at 'Tyr-419'. In collaboration with CD2AP may act as regulatory checkpoint for Ret signaling by modulating the rate of RET degradation after ligand activation; CD2AP converts it from an inhibitor to a promoter of RET degradation; the function limits the potency of GDNF on neuronal survival. In Homo sapiens (Human), this protein is E3 ubiquitin-protein ligase CBL-C (CBLC).